The following is a 116-amino-acid chain: Venom nerve growth factor (116 aa).

Disulfide bonds link cysteine 14–cysteine 78, cysteine 56–cysteine 106, and cysteine 66–cysteine 108. Lysine 86 serves as a coordination point for a 1,2-diacyl-sn-glycerol.

The protein belongs to the NGF-beta family. In terms of assembly, homodimer; non-covalently linked. Interacts with NTRK1. Post-translationally, not glycosylated. Expressed by the venom gland.

It is found in the secreted. Its function is as follows. Nerve growth factor is important for the development and maintenance of the sympathetic and sensory nervous systems. It stimulates division and differentiation of sympathetic and embryonic sensory neurons as well as basal forebrain cholinergic neurons in the brain. Its relevance in the snake venom is not clear. However, it has been shown to inhibit metalloproteinase-dependent proteolysis of platelet glycoprotein Ib alpha, suggesting a metalloproteinase inhibition to prevent metalloprotease autodigestion and/or protection against prey proteases. Binds a lipid between the two protein chains in the homodimer. The lipid-bound form promotes histamine relase from mouse mast cells, contrary to the lipid-free form. The polypeptide is Venom nerve growth factor (Naja atra (Chinese cobra)).